The chain runs to 144 residues: Protein cornichon homolog 1 (144 aa).

The Cytoplasmic segment spans residues M1 to Y10. A helical membrane pass occupies residues M11–F31. The Lumenal portion of the chain corresponds to D32 to Y56. Residues L57–L77 form a helical membrane-spanning segment. Over N78–K122 the chain is Cytoplasmic. The helical transmembrane segment at L123 to S143 threads the bilayer. S144 is a topological domain (lumenal).

The protein belongs to the cornichon family. In terms of assembly, interacts with AREG immature precursor and with immature TGFA, i.e. with a prosegment and lacking full N-glycosylation, but not with the fully N-glycosylated form. In the Golgi apparatus, may form a complex with GORASP55 and transmembrane TGFA.

It is found in the endoplasmic reticulum membrane. Its subcellular location is the golgi apparatus membrane. Functionally, involved in the selective transport and maturation of TGF-alpha family proteins. The polypeptide is Protein cornichon homolog 1 (CNIH1) (Bos taurus (Bovine)).